The primary structure comprises 27 residues: Caerulein precursor fragment R7 (27 aa).

As to expression, expressed by the skin glands.

The protein resides in the secreted. In terms of biological role, antimicrobial peptide. In Xenopus ruwenzoriensis (Uganda clawed frog), this protein is Caerulein precursor fragment R7.